We begin with the raw amino-acid sequence, 362 residues long: Chorismate synthase (362 aa).

An NADP(+)-binding site is contributed by Arg-47. Residues 124-126 (RSS), Gly-286, 301-305 (KPTAT), and Arg-327 each bind FMN.

It belongs to the chorismate synthase family. As to quaternary structure, homotetramer. FMNH2 is required as a cofactor.

It carries out the reaction 5-O-(1-carboxyvinyl)-3-phosphoshikimate = chorismate + phosphate. The protein operates within metabolic intermediate biosynthesis; chorismate biosynthesis; chorismate from D-erythrose 4-phosphate and phosphoenolpyruvate: step 7/7. Functionally, catalyzes the anti-1,4-elimination of the C-3 phosphate and the C-6 proR hydrogen from 5-enolpyruvylshikimate-3-phosphate (EPSP) to yield chorismate, which is the branch point compound that serves as the starting substrate for the three terminal pathways of aromatic amino acid biosynthesis. This reaction introduces a second double bond into the aromatic ring system. The protein is Chorismate synthase of Gloeothece citriformis (strain PCC 7424) (Cyanothece sp. (strain PCC 7424)).